The chain runs to 271 residues: Thiazole synthase (271 aa).

Lysine 95 acts as the Schiff-base intermediate with DXP in catalysis. 1-deoxy-D-xylulose 5-phosphate is bound by residues glycine 156, 182-183 (AG), and 204-205 (NT).

Belongs to the ThiG family. Homotetramer. Forms heterodimers with either ThiH or ThiS.

It is found in the cytoplasm. It catalyses the reaction [ThiS sulfur-carrier protein]-C-terminal-Gly-aminoethanethioate + 2-iminoacetate + 1-deoxy-D-xylulose 5-phosphate = [ThiS sulfur-carrier protein]-C-terminal Gly-Gly + 2-[(2R,5Z)-2-carboxy-4-methylthiazol-5(2H)-ylidene]ethyl phosphate + 2 H2O + H(+). The protein operates within cofactor biosynthesis; thiamine diphosphate biosynthesis. Its function is as follows. Catalyzes the rearrangement of 1-deoxy-D-xylulose 5-phosphate (DXP) to produce the thiazole phosphate moiety of thiamine. Sulfur is provided by the thiocarboxylate moiety of the carrier protein ThiS. In vitro, sulfur can be provided by H(2)S. In Yersinia pestis, this protein is Thiazole synthase.